Here is a 583-residue protein sequence, read N- to C-terminus: Afadin- and alpha-actinin-binding protein (583 aa).

3 coiled-coil regions span residues 108–220 (NNVE…LAIE), 255–333 (DYEA…QLTN), and 420–453 (EEKERLKEEWRLFDEQKRNFEKERKNFTEAAIRL). Positions 285-328 (LSPCPPLNRGGSAEESQELGDSDREERSAETSRETLDQSCEHAR) are disordered. The segment covering 305–328 (DSDREERSAETSRETLDQSCEHAR) has biased composition (basic and acidic residues). Residues 480–527 (DRMRSSSSDGQSALSVKSEPEIRTSSSKAPPVKSSAYTTFSTPKSSKS) form a disordered region. Over residues 484–494 (SSSSDGQSALS) the composition is skewed to polar residues. Residues 504 to 515 (SSSKAPPVKSSA) show a composition bias toward low complexity. Polar residues predominate over residues 516–527 (YTTFSTPKSSKS).

Belongs to the ADIP family.

The protein localises to the cell junction. The protein resides in the adherens junction. It is found in the cytoplasm. Its subcellular location is the cytoskeleton. It localises to the microtubule organizing center. The protein localises to the centrosome. The protein resides in the centriolar satellite. Its function is as follows. Belongs to an adhesion system, which plays a role in the organization of homotypic, interneuronal and heterotypic cell-cell adherens junctions (AJs). Involved in cell movement. Acts as a centrosome maturation factor, probably by maintaining the integrity of the pericentriolar material and proper microtubule nucleation at mitotic spindle poles. This Oryzias latipes (Japanese rice fish) protein is Afadin- and alpha-actinin-binding protein (ssx2ip).